The primary structure comprises 1516 residues: Mediator of RNA polymerase II transcription subunit 14 (1516 aa).

Disordered stretches follow at residues 22 to 98 (LSSQ…EVPA) and 1434 to 1516 (MHRQ…YPPQ). Positions 34-47 (SPAAPISPAPSGSA) are enriched in low complexity. Basic and acidic residues predominate over residues 72–83 (SEVDVKSIHSSD). Residues 1463-1473 (SHQQHMMNPGS) are compositionally biased toward low complexity. Gly residues predominate over residues 1474-1483 (VGPGSVGGPG). The span at 1502 to 1516 (QSYHHPLHHQQYPPQ) shows a compositional bias: low complexity.

The protein belongs to the Mediator complex subunit 14 family. As to quaternary structure, component of the Mediator complex.

It localises to the nucleus. Component of the Mediator complex, a coactivator involved in the regulated transcription of nearly all RNA polymerase II-dependent genes. Mediator functions as a bridge to convey information from gene-specific regulatory proteins to the basal RNA polymerase II transcription machinery. Mediator is recruited to promoters by direct interactions with regulatory proteins and serves as a scaffold for the assembly of a functional preinitiation complex with RNA polymerase II and the general transcription factors. Required for transcription in the embryo and for phosphorylation of the RNA polymerase II C-terminal domain repeat. This Caenorhabditis elegans protein is Mediator of RNA polymerase II transcription subunit 14 (rgr-1).